The chain runs to 171 residues: AP-3 complex subunit sigma (171 aa).

This sequence belongs to the adaptor complexes small subunit family. Adaptor protein complex 3 (AP-3) is a heterotetramer composed of two large adaptins (delta-type subunit and beta-type subunit), a medium adaptin (mu-type subunit) and a small adaptin (sigma-type subunit).

Its subcellular location is the endosome membrane. Its function is as follows. Part of the AP-3 complex, an adaptor-related complex which is essential for the compartmentalization of the endocytic pathway. The protein is AP-3 complex subunit sigma (ap3s1) of Dictyostelium discoideum (Social amoeba).